Here is a 416-residue protein sequence, read N- to C-terminus: cAMP-dependent protein kinase type II-beta regulatory subunit (416 aa).

The interval 2-151 is dimerization and phosphorylation; sequence SIEIPAGLTE…RLQEACKDIL (150 aa). The tract at residues 53–97 is disordered; the sequence is HEGRTWGDAGAAAGGGTPSKGVNFAEEPMRSDSENGEEEEAAEAG. Thr-69 carries the phosphothreonine modification. Residues Ser-83, Ser-85, and Ser-112 each carry the phosphoserine modification. 3',5'-cyclic AMP is bound by residues 152-273, Glu-221, Arg-230, 274-416, Glu-350, and Arg-359; these read LFKN…ESLP and FLKS…EPTA.

The protein belongs to the cAMP-dependent kinase regulatory chain family. In terms of assembly, the inactive form of the enzyme is composed of two regulatory chains and two catalytic chains. Activation by cAMP produces two active catalytic monomers and a regulatory dimer that binds four cAMP molecules. Interacts with PRKACA and PRKACB. Interacts with the phosphorylated form of PJA2. Forms a complex composed of PRKAR2B, GSK3B and GSKIP through GSKIP interaction; facilitates PKA-induced phosphorylation and regulates GSK3B activity. In terms of processing, phosphorylated by the activated catalytic chain. As to expression, four types of regulatory chains are found: I-alpha, I-beta, II-alpha, and II-beta. Their expression varies among tissues and is in some cases constitutive and in others inducible. Brain. Present in a few pyramidal neurons and mostly in mossy fibers. Colocalizes with PJA2 in dentate granule cells and at postsynaptic sites of primary hippocampal neurons.

The protein localises to the cytoplasm. Its subcellular location is the cell membrane. Functionally, regulatory subunit of the cAMP-dependent protein kinases involved in cAMP signaling in cells. Type II regulatory chains mediate membrane association by binding to anchoring proteins, including the MAP2 kinase. In Rattus norvegicus (Rat), this protein is cAMP-dependent protein kinase type II-beta regulatory subunit (Prkar2b).